The primary structure comprises 190 residues: MEARVILIATTNKHKIEEINEVLQSCGYRVEPAAASKLEVQSNRLEDVAAYAAIQAYLALQRPVIVEDAGLFVEALGGFPGPYSSYVFKTIGIRGLLKLLEDVENRRAYFKSVIALAHSGGVEVFTGTVHGVIAEKPRGDRGFGYDPVFIPEGSSKTFAEMETQEKNKFSHRGKAARELCRWLRQYGPPR.

10-15 (TTNKHK) serves as a coordination point for substrate. Mg(2+) contacts are provided by E39 and D68. The Proton acceptor role is filled by D68. Substrate is bound by residues A69, 143–146 (FGYD), K166, and 171–172 (HR).

The protein belongs to the HAM1 NTPase family. Homodimer. It depends on Mg(2+) as a cofactor.

The catalysed reaction is XTP + H2O = XMP + diphosphate + H(+). The enzyme catalyses dITP + H2O = dIMP + diphosphate + H(+). It catalyses the reaction ITP + H2O = IMP + diphosphate + H(+). In terms of biological role, pyrophosphatase that catalyzes the hydrolysis of nucleoside triphosphates to their monophosphate derivatives, with a high preference for the non-canonical purine nucleotides XTP (xanthosine triphosphate), dITP (deoxyinosine triphosphate) and ITP. Seems to function as a house-cleaning enzyme that removes non-canonical purine nucleotides from the nucleotide pool, thus preventing their incorporation into DNA/RNA and avoiding chromosomal lesions. This Hyperthermus butylicus (strain DSM 5456 / JCM 9403 / PLM1-5) protein is dITP/XTP pyrophosphatase.